The chain runs to 621 residues: Chaperone protein HscA homolog (621 aa).

The protein belongs to the heat shock protein 70 family.

Chaperone involved in the maturation of iron-sulfur cluster-containing proteins. Has a low intrinsic ATPase activity which is markedly stimulated by HscB. This Acidithiobacillus ferrooxidans (strain ATCC 23270 / DSM 14882 / CIP 104768 / NCIMB 8455) (Ferrobacillus ferrooxidans (strain ATCC 23270)) protein is Chaperone protein HscA homolog.